A 104-amino-acid polypeptide reads, in one-letter code: Large ribosomal subunit protein uL24 (104 aa).

Belongs to the universal ribosomal protein uL24 family. Part of the 50S ribosomal subunit.

In terms of biological role, one of two assembly initiator proteins, it binds directly to the 5'-end of the 23S rRNA, where it nucleates assembly of the 50S subunit. Its function is as follows. One of the proteins that surrounds the polypeptide exit tunnel on the outside of the subunit. The sequence is that of Large ribosomal subunit protein uL24 from Clostridium perfringens (strain ATCC 13124 / DSM 756 / JCM 1290 / NCIMB 6125 / NCTC 8237 / Type A).